Consider the following 64-residue polypeptide: Probable cytochrome c oxidase subunit 5C-3 (64 aa).

Residues 15–34 (SVVKELVIGLTLGLAAGGLW) form a helical membrane-spanning segment.

The protein belongs to the cytochrome c oxidase subunit 5C family.

The protein resides in the mitochondrion inner membrane. Functionally, this protein is one of the nuclear-coded polypeptide chains of cytochrome c oxidase, the terminal oxidase in mitochondrial electron transport. The chain is Probable cytochrome c oxidase subunit 5C-3 from Arabidopsis thaliana (Mouse-ear cress).